A 273-amino-acid chain; its full sequence is Putative phosphoenolpyruvate synthase regulatory protein (273 aa).

153 to 160 (AVSRAGKT) contributes to the ADP binding site.

This sequence belongs to the pyruvate, phosphate/water dikinase regulatory protein family. PSRP subfamily.

The enzyme catalyses [pyruvate, water dikinase] + ADP = [pyruvate, water dikinase]-phosphate + AMP + H(+). The catalysed reaction is [pyruvate, water dikinase]-phosphate + phosphate + H(+) = [pyruvate, water dikinase] + diphosphate. In terms of biological role, bifunctional serine/threonine kinase and phosphorylase involved in the regulation of the phosphoenolpyruvate synthase (PEPS) by catalyzing its phosphorylation/dephosphorylation. The chain is Putative phosphoenolpyruvate synthase regulatory protein from Stenotrophomonas maltophilia (strain R551-3).